The sequence spans 397 residues: Serpin B10 (397 aa).

The tract at residues 62-85 (RDQGVKSSPESEKKRKMEFNSSNS) is disordered. Residues 70 to 79 (PESEKKRKME) show a composition bias toward basic and acidic residues. A Nuclear localization signal motif is present at residues 74 to 77 (KKRK).

Belongs to the serpin family. Ov-serpin subfamily.

Its subcellular location is the nucleus. It is found in the cytoplasm. Its function is as follows. Protease inhibitor that may play a role in the regulation of protease activities during hematopoiesis and apoptosis induced by TNF. May regulate protease activities in the cytoplasm and in the nucleus. The sequence is that of Serpin B10 (SERPINB10) from Papio anubis (Olive baboon).